Consider the following 465-residue polypeptide: Cysteine--tRNA ligase (465 aa).

Residue Cys-29 participates in Zn(2+) binding. Residues 31–41 (PTVYNYIHIGN) carry the 'HIGH' region motif. Positions 209, 234, and 238 each coordinate Zn(2+). Residues 266-270 (KMSKS) carry the 'KMSKS' region motif. Position 269 (Lys-269) interacts with ATP. The residue at position 270 (Ser-270) is a Phosphoserine.

It belongs to the class-I aminoacyl-tRNA synthetase family. In terms of assembly, monomer. Zn(2+) serves as cofactor.

The protein resides in the cytoplasm. It catalyses the reaction tRNA(Cys) + L-cysteine + ATP = L-cysteinyl-tRNA(Cys) + AMP + diphosphate. This is Cysteine--tRNA ligase from Bacillus cereus (strain AH187).